The primary structure comprises 102 residues: Large ribosomal subunit protein bL21 (102 aa).

It belongs to the bacterial ribosomal protein bL21 family. In terms of assembly, part of the 50S ribosomal subunit. Contacts protein L20.

Functionally, this protein binds to 23S rRNA in the presence of protein L20. This Cytophaga hutchinsonii (strain ATCC 33406 / DSM 1761 / CIP 103989 / NBRC 15051 / NCIMB 9469 / D465) protein is Large ribosomal subunit protein bL21.